The sequence spans 396 residues: Probable sugar efflux transporter (396 aa).

A run of 12 helical transmembrane segments spans residues 15–35, 50–70, 81–101, 103–123, 136–156, 170–190, 209–229, 246–266, 275–295, 299–319, 333–353, and 364–384; these read VVTLAVAAFIFNTTEFVPVGL, VGIMLTIYAWVVALMSLPFML, LICLFVVFIASHVLSFLSWSF, VLVISRIGVAFAHAIFWSITA, AQALSLIATGTALAMVLGLPL, FFAIGIGALVTLLCLIKLLPL, PALMSIYLLTVVVVTAHYTAY, FATALLLLLGGAGIIGSVIFG, ALVSTAIALLLVCLALLLPAA, IHLGVLSIFWGIAMMIIGLGM, VAMALFSGIFNIGIGAGALVG, and MIGYVGAVPAFAALIWSIIIF.

It belongs to the major facilitator superfamily. SotB (TC 2.A.1.2) family.

Its subcellular location is the cell inner membrane. Involved in the efflux of sugars. The physiological role may be the reduction of the intracellular concentration of toxic sugars or sugar metabolites. The protein is Probable sugar efflux transporter of Shigella flexneri serotype 5b (strain 8401).